The sequence spans 219 residues: 7-cyano-7-deazaguanine synthase 2 (219 aa).

Residue 8–18 (YSGGMDSFTAL) participates in ATP binding. The Zn(2+) site is built by C185, C193, C196, and C199.

This sequence belongs to the QueC family. Zn(2+) is required as a cofactor.

It catalyses the reaction 7-carboxy-7-deazaguanine + NH4(+) + ATP = 7-cyano-7-deazaguanine + ADP + phosphate + H2O + H(+). The protein operates within purine metabolism; 7-cyano-7-deazaguanine biosynthesis. Catalyzes the ATP-dependent conversion of 7-carboxy-7-deazaguanine (CDG) to 7-cyano-7-deazaguanine (preQ(0)). This chain is 7-cyano-7-deazaguanine synthase 2, found in Colwellia psychrerythraea (strain 34H / ATCC BAA-681) (Vibrio psychroerythus).